A 597-amino-acid chain; its full sequence is Elongation factor 4 (597 aa).

The tr-type G domain occupies 2-184; it reads KNIRNFSIIA…EVVNKIPPPK (183 aa). Residues 14–19 and 131–134 contribute to the GTP site; these read DHGKST and NKID.

This sequence belongs to the TRAFAC class translation factor GTPase superfamily. Classic translation factor GTPase family. LepA subfamily.

The protein resides in the cell inner membrane. The catalysed reaction is GTP + H2O = GDP + phosphate + H(+). Required for accurate and efficient protein synthesis under certain stress conditions. May act as a fidelity factor of the translation reaction, by catalyzing a one-codon backward translocation of tRNAs on improperly translocated ribosomes. Back-translocation proceeds from a post-translocation (POST) complex to a pre-translocation (PRE) complex, thus giving elongation factor G a second chance to translocate the tRNAs correctly. Binds to ribosomes in a GTP-dependent manner. This is Elongation factor 4 from Chromobacterium violaceum (strain ATCC 12472 / DSM 30191 / JCM 1249 / CCUG 213 / NBRC 12614 / NCIMB 9131 / NCTC 9757 / MK).